The sequence spans 1113 residues: Period circadian protein homolog 3 (1113 aa).

Residues 1-48 (MDPCGDPAVPGGDCPQTRGPGLQGASGQEGPLQGTCVDSSHSEHEDRN) are disordered. Positions 54–63 (LIMVVQEMKK) match the Nuclear export signal 1 motif. PAS domains follow at residues 120–187 (LASE…PTQL) and 258–324 (YEAP…KVLK). The PAC domain maps to 333 to 376 (HSPVRFCTQNGEYVILDSSWSSFVNPWSRKVSFIIGRHKVRTSP). The short motif at 399 to 408 (LQEQIHKLLL) is the Nuclear export signal 3 element. A compositionally biased stretch (low complexity) spans 418–427 (GYGSLGSSGS). Disordered regions lie at residues 418-451 (GYGS…GQHE), 485-530 (VAET…SSSY), 561-580 (TSSS…SQRD), 718-742 (HSRC…DTSS), and 871-906 (LVPA…PFIS). 2 stretches are compositionally biased toward polar residues: residues 428–441 (QEQH…SESS) and 501–530 (FSSS…SSSY). The CSNK1E binding domain stretch occupies residues 551–750 (LKRKCISCTN…SSPGAHLCPH (200 aa)). Residues 566–580 (EEAKPIPEVDSSQRD) are compositionally biased toward basic and acidic residues. The Nuclear localization signal signature appears at 719–735 (SRCAGSERQKHKRKKLP). The segment covering 889-901 (RRVEENWEAHSEE) has biased composition (basic and acidic residues). Ser907 carries the phosphoserine modification. The short motif at 913-920 (LQLNLLQE) is the Nuclear export signal 2 element. A disordered region spans residues 921–1010 (EMPAPSESAD…DRQRDEALPG (90 aa)). Residues 962 to 986 (ATATAQQESAAASGSSASSIYFSST) show a composition bias toward low complexity. Basic and acidic residues predominate over residues 993–1007 (SENRQRPQDRQRDEA). Positions 1035–1113 (ERGREEVLKQ…LEQHPAEDTS (79 aa)) are CRY binding domain.

Homodimer. Component of the circadian core oscillator, which includes the CRY proteins, CLOCK or NPAS2, BMAL1 or BMAL2, CSNK1D and/or CSNK1E, TIMELESS and the PER proteins. Interacts directly with PER1, PER2, CRY1, CRY2, and TIMELESS; interaction with CRY1 and CRY2 is weak and not rhythmic. Interacts with FBXW11 and BTRC. Phosphorylation by CSNK1E is weak and appears to require association with PER1 and translocation to the nucleus. In terms of processing, ubiquitinated. In terms of tissue distribution, widely expressed. Expressed in heart, brain, lung, liver, skeletal muscle, testis, and at low level in the spleen and kidney. In brain, mainly found in the SCN, hippocampus, piriform cortex, and cerebellum. Lower level of expression in the neocortex. Expression exhibits synchronous oscillations in liver, skeletal muscle and testis.

The protein resides in the cytoplasm. Its subcellular location is the nucleus. Originally described as a core component of the circadian clock. The circadian clock, an internal time-keeping system, regulates various physiological processes through the generation of approximately 24 hour circadian rhythms in gene expression, which are translated into rhythms in metabolism and behavior. It is derived from the Latin roots 'circa' (about) and 'diem' (day) and acts as an important regulator of a wide array of physiological functions including metabolism, sleep, body temperature, blood pressure, endocrine, immune, cardiovascular, and renal function. Consists of two major components: the central clock, residing in the suprachiasmatic nucleus (SCN) of the brain, and the peripheral clocks that are present in nearly every tissue and organ system. Both the central and peripheral clocks can be reset by environmental cues, also known as Zeitgebers (German for 'timegivers'). The predominant Zeitgeber for the central clock is light, which is sensed by retina and signals directly to the SCN. The central clock entrains the peripheral clocks through neuronal and hormonal signals, body temperature and feeding-related cues, aligning all clocks with the external light/dark cycle. Circadian rhythms allow an organism to achieve temporal homeostasis with its environment at the molecular level by regulating gene expression to create a peak of protein expression once every 24 hours to control when a particular physiological process is most active with respect to the solar day. Transcription and translation of core clock components (CLOCK, NPAS2, BMAL1, BMAL2, PER1, PER2, PER3, CRY1 and CRY2) plays a critical role in rhythm generation, whereas delays imposed by post-translational modifications (PTMs) are important for determining the period (tau) of the rhythms (tau refers to the period of a rhythm and is the length, in time, of one complete cycle). A diurnal rhythm is synchronized with the day/night cycle, while the ultradian and infradian rhythms have a period shorter and longer than 24 hours, respectively. Disruptions in the circadian rhythms contribute to the pathology of cardiovascular diseases, cancer, metabolic syndromes and aging. A transcription/translation feedback loop (TTFL) forms the core of the molecular circadian clock mechanism. Transcription factors, CLOCK or NPAS2 and BMAL1 or BMAL2, form the positive limb of the feedback loop, act in the form of a heterodimer and activate the transcription of core clock genes and clock-controlled genes (involved in key metabolic processes), harboring E-box elements (5'-CACGTG-3') within their promoters. The core clock genes: PER1/2/3 and CRY1/2 which are transcriptional repressors form the negative limb of the feedback loop and interact with the CLOCK|NPAS2-BMAL1|BMAL2 heterodimer inhibiting its activity and thereby negatively regulating their own expression. This heterodimer also activates nuclear receptors NR1D1, NR1D2, RORA, RORB and RORG, which form a second feedback loop and which activate and repress BMAL1 transcription, respectively. Has a redundant role with the other PER proteins PER1 and PER2 and is not essential for the circadian rhythms maintenance. In contrast, plays an important role in sleep-wake timing and sleep homeostasis probably through the transcriptional regulation of sleep homeostasis-related genes, without influencing circadian parameters. Can bind heme. This Mus musculus (Mouse) protein is Period circadian protein homolog 3 (Per3).